The following is an 80-amino-acid chain: Serine palmitoyltransferase-regulating protein TSC3 (80 aa).

Residues 54–74 form a helical membrane-spanning segment; that stretch reads FDSFFLHVFFLTIFSLSFFGI.

In terms of assembly, interacts with the serine palmitoyltransferase complex LCB1-LCB2. Component of the SPOTS complex, at least composed of LCB1/2 (LCB1 and/or LCB2), ORM1/2 (ORM1 and/or ORM2), SAC1 and TSC3.

Its subcellular location is the endoplasmic reticulum membrane. Stimulates the activity of serine palmitoyltransferase (SPT), and thus plays a role in the biosynthesis of sphingolipids. This chain is Serine palmitoyltransferase-regulating protein TSC3 (TSC3), found in Saccharomyces cerevisiae (strain ATCC 204508 / S288c) (Baker's yeast).